The following is a 592-amino-acid chain: Proline--tRNA ligase (592 aa).

This sequence belongs to the class-II aminoacyl-tRNA synthetase family. ProS type 1 subfamily. As to quaternary structure, homodimer.

It is found in the cytoplasm. The catalysed reaction is tRNA(Pro) + L-proline + ATP = L-prolyl-tRNA(Pro) + AMP + diphosphate. Its function is as follows. Catalyzes the attachment of proline to tRNA(Pro) in a two-step reaction: proline is first activated by ATP to form Pro-AMP and then transferred to the acceptor end of tRNA(Pro). As ProRS can inadvertently accommodate and process non-cognate amino acids such as alanine and cysteine, to avoid such errors it has two additional distinct editing activities against alanine. One activity is designated as 'pretransfer' editing and involves the tRNA(Pro)-independent hydrolysis of activated Ala-AMP. The other activity is designated 'posttransfer' editing and involves deacylation of mischarged Ala-tRNA(Pro). The misacylated Cys-tRNA(Pro) is not edited by ProRS. The polypeptide is Proline--tRNA ligase (Corynebacterium urealyticum (strain ATCC 43042 / DSM 7109)).